The sequence spans 121 residues: Small ribosomal subunit protein uS13 (121 aa).

The tract at residues 97–121 is disordered; that stretch reads VRGQRTRTNARTRRGARKTVAGKKK. Residues 100-121 show a composition bias toward basic residues; sequence QRTRTNARTRRGARKTVAGKKK.

Belongs to the universal ribosomal protein uS13 family. Part of the 30S ribosomal subunit. Forms a loose heterodimer with protein S19. Forms two bridges to the 50S subunit in the 70S ribosome.

Its function is as follows. Located at the top of the head of the 30S subunit, it contacts several helices of the 16S rRNA. In the 70S ribosome it contacts the 23S rRNA (bridge B1a) and protein L5 of the 50S subunit (bridge B1b), connecting the 2 subunits; these bridges are implicated in subunit movement. Contacts the tRNAs in the A and P-sites. The sequence is that of Small ribosomal subunit protein uS13 from Synechococcus sp. (strain CC9902).